The primary structure comprises 393 residues: Dual specificity mitogen-activated protein kinase kinase 1 (393 aa).

The segment at 1 to 27 is disordered; it reads MPKKKPTPIQLNPAPDGSAVNGTSSAE. The Protein kinase domain maps to 68–361; the sequence is FEKISELGAG…LKQLMVHAFI (294 aa). ATP contacts are provided by residues 74-82, Lys97, 143-146, and 150-153; these read LGAGNGGVV, MEHM, and SLDQ. Lys97 lines the U0126 pocket. 144–146 is a K-252a binding site; that stretch reads EHM. Asp190 serves as the catalytic Proton acceptor. Residues 192–195 and Asp208 contribute to the ATP site; that span reads KPSN. Ser194 is a K-252a binding site. 208-211 contacts U0126; it reads DFGV. A phosphoserine; by BRAF and RAF1 mark is found at Ser218 and Ser222. Positions 270–307 are RAF1-binding; it reads ELELMFGCQVEGDAAETPPRPRTPGRPLSSYGMDSRPP. Thr286 is modified (phosphothreonine). Thr292 is subject to Phosphothreonine; by MAPK1. Ser298 is subject to Phosphoserine; by PAK.

This sequence belongs to the protein kinase superfamily. STE Ser/Thr protein kinase family. MAP kinase kinase subfamily. As to quaternary structure, found in a complex with at least BRAF, HRAS, MAP2K1, MAPK3/ERK1 and RGS14. Forms a heterodimer with MAP2K2/MEK2. Forms heterodimers with KSR2 which further dimerize to form tetramers. Interacts with KSR1 or KSR2 and BRAF; the interaction with KSR1 or KSR2 mediates KSR1-BRAF or KSR2-BRAF dimerization. Interacts with ARBB2, LAMTOR3 and RAF1. Interacts with MAPK1/ERK2. Interacts with MORG1. Interacts with PPARG. Interacts with isoform 1 of VRK2. Interacts with SGK1. Interacts with BIRC6/bruce. Interacts with KAT7; the interaction promotes KAT7 phosphorylation. Interacts with RAF1 and NEK10; the interaction is required for ERK1/2-signaling pathway activation in response to UV irradiation. Interacts with TRAF3IP3. Interacts with MOS. (Microbial infection) Interacts with Yersinia YopJ. Post-translationally, phosphorylation at Ser-218 and Ser-222 by MAP kinase kinase kinases (BRAF or MEKK1) positively regulates kinase activity. Also phosphorylated at Thr-292 by MAPK1/ERK2 and at Ser-298 by PAK. MAPK1/ERK2 phosphorylation of Thr-292 occurs in response to cellular adhesion and leads to inhibition of Ser-298 phosphorylation by PAK. Autophosphorylated at Ser-218 and Ser-222, autophosphosphorylation is promoted by NEK10 following UV irradiation. In terms of processing, (Microbial infection) Acetylation by Yersinia YopJ prevents phosphorylation and activation, thus blocking the MAPK signaling pathway. In terms of tissue distribution, widely expressed, with extremely low levels in brain.

The protein resides in the cytoplasm. It is found in the cytoskeleton. It localises to the microtubule organizing center. The protein localises to the centrosome. Its subcellular location is the spindle pole body. The protein resides in the nucleus. It is found in the membrane. It catalyses the reaction L-seryl-[protein] + ATP = O-phospho-L-seryl-[protein] + ADP + H(+). The enzyme catalyses L-threonyl-[protein] + ATP = O-phospho-L-threonyl-[protein] + ADP + H(+). The catalysed reaction is L-tyrosyl-[protein] + ATP = O-phospho-L-tyrosyl-[protein] + ADP + H(+). With respect to regulation, ras proteins such as HRAS mediate the activation of RAF proteins such as RAF1 or BRAF which in turn activate extracellular signal-regulated kinases (ERK) through MAPK (mitogen-activated protein kinases) and ERK kinases MAP2K1/MEK1 and MAP2K2/MEK2. Activation occurs through phosphorylation of Ser-218 and Ser-222. MAP2K1/MEK1 binds KSR1 or KSR2 releasing the inhibitory intramolecular interaction between KSR1 or KSR2 protein kinase and N-terminal domains. This allows KSR1 or KSR2 dimerization with BRAF leading to BRAF activation and phosphorylation of MAP2K1. MAP2K1/MEK1 is also the target of negative feed-back regulation by its substrate kinases, such as MAPK1/ERK2. These phosphorylate MAP2K1/MEK1 on Thr-292, thereby facilitating dephosphorylation of the activating residues Ser-218 and Ser-222. Inhibited by serine/threonine phosphatase 2A. Many inhibitors have been identified including pyrrole derivatives, TAK-733 (one of a series of 8-methylpyrido[2,3-d]pyrimidine-4,7(3H,8H)-dione derivatives), CH4987655 and RDEA119/BAY 869766. Its function is as follows. Dual specificity protein kinase which acts as an essential component of the MAP kinase signal transduction pathway. Binding of extracellular ligands such as growth factors, cytokines and hormones to their cell-surface receptors activates RAS and this initiates RAF1 activation. RAF1 then further activates the dual-specificity protein kinases MAP2K1/MEK1 and MAP2K2/MEK2. Both MAP2K1/MEK1 and MAP2K2/MEK2 function specifically in the MAPK/ERK cascade, and catalyze the concomitant phosphorylation of a threonine and a tyrosine residue in a Thr-Glu-Tyr sequence located in the extracellular signal-regulated kinases MAPK3/ERK1 and MAPK1/ERK2, leading to their activation and further transduction of the signal within the MAPK/ERK cascade. Activates BRAF in a KSR1 or KSR2-dependent manner; by binding to KSR1 or KSR2 releases the inhibitory intramolecular interaction between KSR1 or KSR2 protein kinase and N-terminal domains which promotes KSR1 or KSR2-BRAF dimerization and BRAF activation. Depending on the cellular context, this pathway mediates diverse biological functions such as cell growth, adhesion, survival and differentiation, predominantly through the regulation of transcription, metabolism and cytoskeletal rearrangements. One target of the MAPK/ERK cascade is peroxisome proliferator-activated receptor gamma (PPARG), a nuclear receptor that promotes differentiation and apoptosis. MAP2K1/MEK1 has been shown to export PPARG from the nucleus. The MAPK/ERK cascade is also involved in the regulation of endosomal dynamics, including lysosome processing and endosome cycling through the perinuclear recycling compartment (PNRC), as well as in the fragmentation of the Golgi apparatus during mitosis. In Homo sapiens (Human), this protein is Dual specificity mitogen-activated protein kinase kinase 1.